A 469-amino-acid chain; its full sequence is Soluble pyridine nucleotide transhydrogenase (469 aa).

Residue 39–48 (ERENSVGGGC) participates in FAD binding.

It belongs to the class-I pyridine nucleotide-disulfide oxidoreductase family. The cofactor is FAD.

The protein resides in the cytoplasm. The catalysed reaction is NAD(+) + NADPH = NADH + NADP(+). In terms of biological role, conversion of NADPH, generated by peripheral catabolic pathways, to NADH, which can enter the respiratory chain for energy generation. This is Soluble pyridine nucleotide transhydrogenase from Photobacterium profundum (strain SS9).